We begin with the raw amino-acid sequence, 282 residues long: Pantothenate synthetase (282 aa).

30-37 contacts ATP; that stretch reads MGYLHEGH. H37 acts as the Proton donor in catalysis. Q61 contacts (R)-pantoate. Beta-alanine is bound at residue Q61. 147 to 150 lines the ATP pocket; sequence GMKD. A (R)-pantoate-binding site is contributed by Q153. ATP-binding positions include V176 and 184-187; that span reads KSSR.

This sequence belongs to the pantothenate synthetase family. In terms of assembly, homodimer.

Its subcellular location is the cytoplasm. It catalyses the reaction (R)-pantoate + beta-alanine + ATP = (R)-pantothenate + AMP + diphosphate + H(+). The protein operates within cofactor biosynthesis; (R)-pantothenate biosynthesis; (R)-pantothenate from (R)-pantoate and beta-alanine: step 1/1. In terms of biological role, catalyzes the condensation of pantoate with beta-alanine in an ATP-dependent reaction via a pantoyl-adenylate intermediate. The chain is Pantothenate synthetase from Bacillus cytotoxicus (strain DSM 22905 / CIP 110041 / 391-98 / NVH 391-98).